The following is a 193-amino-acid chain: Large ribosomal subunit protein uL18 (193 aa).

It belongs to the universal ribosomal protein uL18 family. Part of the 50S ribosomal subunit. Contacts the 5S and 23S rRNAs.

This is one of the proteins that bind and probably mediate the attachment of the 5S RNA into the large ribosomal subunit, where it forms part of the central protuberance. This Methanococcus vannielii (strain ATCC 35089 / DSM 1224 / JCM 13029 / OCM 148 / SB) protein is Large ribosomal subunit protein uL18.